The following is a 328-amino-acid chain: MQGSVIEFLKPNLVGIEQINATRAKVTLGPLERGFGHTLGNALRRILLSSMPGTAVTEVEIDGVQHEYSTKEGVQEDILEILLNLKGLAVKLEGKDNVLVSLTKSGAGPVTAGDITHGSDVEIVNPEHVICHLTGNAEISMRIKIESGRGYVPASSRIHTEEDERPIGRLLVDATFSPVERIAYSVESARVEQRTDLDKLVIDMETDGTLDPEEAIRRAATILAEQLDAFVDLRKVSEPVAKEEKPEFDPILLRPVDDLELTVRSANCLKAETIHYIGDLVQRTEVELLKTPNLGKKSLTEIKDVLASRGLSLGMRLENWPPASLSED.

Residues 1–234 (MQGSVIEFLK…EQLDAFVDLR (234 aa)) are alpha N-terminal domain (alpha-NTD). The interval 248-328 (FDPILLRPVD…NWPPASLSED (81 aa)) is alpha C-terminal domain (alpha-CTD).

This sequence belongs to the RNA polymerase alpha chain family. In terms of assembly, homodimer. The RNAP catalytic core consists of 2 alpha, 1 beta, 1 beta' and 1 omega subunit. When a sigma factor is associated with the core the holoenzyme is formed, which can initiate transcription.

It carries out the reaction RNA(n) + a ribonucleoside 5'-triphosphate = RNA(n+1) + diphosphate. In terms of biological role, DNA-dependent RNA polymerase catalyzes the transcription of DNA into RNA using the four ribonucleoside triphosphates as substrates. In Psychromonas ingrahamii (strain DSM 17664 / CCUG 51855 / 37), this protein is DNA-directed RNA polymerase subunit alpha 2.